Consider the following 388-residue polypeptide: P2X purinoceptor 4 (388 aa).

The Cytoplasmic segment spans residues Met-1 to Arg-33. The helical transmembrane segment at Val-34 to Tyr-54 threads the bilayer. The Extracellular portion of the chain corresponds to Gln-55–Asn-338. ATP is bound by residues Lys-67 and Lys-69. Residues Lys-67 and Lys-69 each contribute to the CTP site. Residues Asn-75, Asn-110, Asn-131, Asn-153, and Asn-184 are each glycosylated (N-linked (GlcNAc...) asparagine). Cystine bridges form between Cys-116–Cys-165, Cys-126–Cys-149, and Cys-132–Cys-159. ATP contacts are provided by Thr-186 and Leu-188. Thr-186 provides a ligand contact to CTP. Residues Asn-199 and Asn-208 are each glycosylated (N-linked (GlcNAc...) asparagine). Cystine bridges form between Cys-217–Cys-227 and Cys-261–Cys-270. Asn-293, Arg-295, and Lys-313 together coordinate ATP. Positions 293, 295, and 313 each coordinate CTP. The helical transmembrane segment at Val-339 to Tyr-359 threads the bilayer. Over Cys-360–Gln-388 the chain is Cytoplasmic.

Belongs to the P2X receptor family. As to quaternary structure, functional P2RXs are organized as homomeric and heteromeric trimers. Functional P2XRs are organized as homomeric and heteromeric trimers. Forms heterotrimer with P2RX1. Interacts with P2RX7 (via C-terminus); this interaction is functional only in the presence of ATP. Forms heterotrimer with P2RX4; functional differences between homomeric P2RX4 and P2RX4/6 heterotrimer are minor. Interacts with AP1M2.

Its subcellular location is the cell membrane. The protein localises to the lysosome membrane. The catalysed reaction is K(+)(in) = K(+)(out). It catalyses the reaction Na(+)(in) = Na(+)(out). It carries out the reaction Ca(2+)(in) = Ca(2+)(out). With respect to regulation, activated by ATP. pH-dependent and inhibited by acidic pH. In terms of biological role, ATP-gated nonselective transmembrane cation channel permeable to potassium, sodium and calcium. CTP, but not GTP or UTP, functions as a weak affinity agonist for P2RX4. Activated by extracellularly released ATP, it plays multiple role in immunity and central nervous system physiology. Plays a key role in initial steps of T-cell activation and Ca(2+) microdomain formation. Also participates in basal T-cell activity without TCR/CD3 stimulation. Promotes the differentiation and activation of Th17 cells via expression of retinoic acid-related orphan receptor C/RORC. Upon activation, drives microglia motility via the PI3K/Akt pathway. Could also function as an ATP-gated cation channel of lysosomal membranes. The protein is P2X purinoceptor 4 (P2rx4) of Mus musculus (Mouse).